Here is a 791-residue protein sequence, read N- to C-terminus: uncharacterized protein (791 aa).

The helical transmembrane segment at 10-30 (LLTITIGAVAVSSILLGGIFY) threads the bilayer. The span at 56-76 (NLDYQKARPSIKDNNLKEIPK) shows a compositional bias: basic and acidic residues. Residues 56-175 (NLDYQKARPS…PQPQQIPNQS (120 aa)) form a disordered region. Positions 77–97 (PKPQPKPEPQPTPFPDPIPTP) are enriched in pro residues. Over residues 98-124 (PKKEELKKPEIKPEEPKKPEIKPEPIP) the composition is skewed to basic and acidic residues. Over residues 125–139 (KPKPQPIPQPTPPVE) the composition is skewed to pro residues.

To U.parvum UU044.

The protein resides in the membrane. This is an uncharacterized protein from Ureaplasma parvum serovar 3 (strain ATCC 700970).